The sequence spans 457 residues: ATP synthase subunit beta (457 aa).

147–154 is an ATP binding site; it reads GGAGVGKT.

This sequence belongs to the ATPase alpha/beta chains family. F-type ATPases have 2 components, CF(1) - the catalytic core - and CF(0) - the membrane proton channel. CF(1) has five subunits: alpha(3), beta(3), gamma(1), delta(1), epsilon(1). CF(0) has three main subunits: a(1), b(2) and c(9-12). The alpha and beta chains form an alternating ring which encloses part of the gamma chain. CF(1) is attached to CF(0) by a central stalk formed by the gamma and epsilon chains, while a peripheral stalk is formed by the delta and b chains.

It localises to the cell inner membrane. The catalysed reaction is ATP + H2O + 4 H(+)(in) = ADP + phosphate + 5 H(+)(out). Produces ATP from ADP in the presence of a proton gradient across the membrane. The catalytic sites are hosted primarily by the beta subunits. The polypeptide is ATP synthase subunit beta (Haemophilus influenzae (strain 86-028NP)).